The chain runs to 173 residues: ATP synthase subunit b (173 aa).

Residues 20 to 40 traverse the membrane as a helical segment; sequence IIATLAIFLVLMFLLKKVAWG.

The protein belongs to the ATPase B chain family. As to quaternary structure, F-type ATPases have 2 components, F(1) - the catalytic core - and F(0) - the membrane proton channel. F(1) has five subunits: alpha(3), beta(3), gamma(1), delta(1), epsilon(1). F(0) has three main subunits: a(1), b(2) and c(10-14). The alpha and beta chains form an alternating ring which encloses part of the gamma chain. F(1) is attached to F(0) by a central stalk formed by the gamma and epsilon chains, while a peripheral stalk is formed by the delta and b chains.

Its subcellular location is the cell membrane. In terms of biological role, f(1)F(0) ATP synthase produces ATP from ADP in the presence of a proton or sodium gradient. F-type ATPases consist of two structural domains, F(1) containing the extramembraneous catalytic core and F(0) containing the membrane proton channel, linked together by a central stalk and a peripheral stalk. During catalysis, ATP synthesis in the catalytic domain of F(1) is coupled via a rotary mechanism of the central stalk subunits to proton translocation. Its function is as follows. Component of the F(0) channel, it forms part of the peripheral stalk, linking F(1) to F(0). This Lysinibacillus sphaericus (strain C3-41) protein is ATP synthase subunit b.